Here is a 399-residue protein sequence, read N- to C-terminus: uncharacterized protein (399 aa).

The next 9 helical transmembrane spans lie at 46–66, 76–95, 139–159, 181–201, 226–246, 262–282, 303–323, 330–350, and 352–372; these read IAPYLITLTGTITILLSFFIV, TLPRWVYAMSGLTLFFYQTM, GVGYISLIQLFITALLPFWMA, IIIIVCALLSTAIFGNAFWTF, LMLNEIIVASLSLPCLITCFF, ILPALKHILVWVIITVSSFIW, VQFSIGIIFGELVSRLILAHM, IIQAPLYPLILSTFCSTINYF, and GTIIIPENLLLILFTVTSFVH.

It belongs to the CDP-alcohol phosphatidyltransferase class-I family.

Its subcellular location is the membrane. This is an uncharacterized protein from Dictyostelium discoideum (Social amoeba).